We begin with the raw amino-acid sequence, 101 residues long: Small ribosomal subunit protein uS14 (101 aa).

It belongs to the universal ribosomal protein uS14 family. In terms of assembly, part of the 30S ribosomal subunit. Contacts proteins S3 and S10.

Its function is as follows. Binds 16S rRNA, required for the assembly of 30S particles and may also be responsible for determining the conformation of the 16S rRNA at the A site. This is Small ribosomal subunit protein uS14 from Haemophilus influenzae (strain PittGG).